Reading from the N-terminus, the 243-residue chain is CR(VI) reductase (243 aa).

The protein belongs to the flavin oxidoreductase frp family. FMN is required as a cofactor.

The protein is CR(VI) reductase (chrR) of Pseudomonas sp. (strain G-1).